Consider the following 258-residue polypeptide: Ditrans,polycis-undecaprenyl-diphosphate synthase ((2E,6E)-farnesyl-diphosphate specific) (258 aa).

The active site involves Asp-24. Asp-24 is a Mg(2+) binding site. Substrate contacts are provided by residues 25 to 28 (GNGR), Trp-29, Arg-37, His-41, and 69 to 71 (SSE). Residue Asn-72 is the Proton acceptor of the active site. Substrate contacts are provided by residues Trp-73, Arg-75, Arg-192, and 198-200 (RIS). Residue Glu-211 coordinates Mg(2+).

It belongs to the UPP synthase family. In terms of assembly, homodimer. The cofactor is Mg(2+).

The enzyme catalyses 8 isopentenyl diphosphate + (2E,6E)-farnesyl diphosphate = di-trans,octa-cis-undecaprenyl diphosphate + 8 diphosphate. Functionally, catalyzes the sequential condensation of isopentenyl diphosphate (IPP) with (2E,6E)-farnesyl diphosphate (E,E-FPP) to yield (2Z,6Z,10Z,14Z,18Z,22Z,26Z,30Z,34E,38E)-undecaprenyl diphosphate (di-trans,octa-cis-UPP). UPP is the precursor of glycosyl carrier lipid in the biosynthesis of bacterial cell wall polysaccharide components such as peptidoglycan and lipopolysaccharide. The chain is Ditrans,polycis-undecaprenyl-diphosphate synthase ((2E,6E)-farnesyl-diphosphate specific) from Xanthomonas oryzae pv. oryzae (strain KACC10331 / KXO85).